We begin with the raw amino-acid sequence, 219 residues long: RING-H2 finger protein ATL78 (219 aa).

The helical transmembrane segment at 57-77 (VMVLSVLLCALVCSLGLNSII) threads the bilayer. An RING-type; atypical zinc finger spans residues 131–173 (CAICLSEFVAEERVKLLPTCHHGFHVRCIDKWLSSHSSCPTCR).

The protein belongs to the RING-type zinc finger family. ATL subfamily.

It localises to the membrane. It catalyses the reaction S-ubiquitinyl-[E2 ubiquitin-conjugating enzyme]-L-cysteine + [acceptor protein]-L-lysine = [E2 ubiquitin-conjugating enzyme]-L-cysteine + N(6)-ubiquitinyl-[acceptor protein]-L-lysine.. Its pathway is protein modification; protein ubiquitination. This Arabidopsis thaliana (Mouse-ear cress) protein is RING-H2 finger protein ATL78 (ATL78).